Consider the following 1028-residue polypeptide: Serine/threonine-protein kinase fray2 (1028 aa).

The interval 1–67 is disordered; it reads MSDDKYHHDK…PKPRKNYPNS (67 aa). Over residues 20 to 54 the composition is skewed to low complexity; the sequence is KQSTAAALSSSSTLASSSSMTTTTTTTSTTTTAAS. Positions 71–330 constitute a Protein kinase domain; it reads YELKETIGKG…PSKLLEHRFF (260 aa). ATP is bound by residues 77 to 85 and K100; that span reads IGKGGSGLV. The active-site Proton acceptor is D195. The residue at position 230 (T230) is a Phosphothreonine; by autocatalysis. Residues 368–381 are compositionally biased toward polar residues; it reads TSSPQFDTGHSNSA. Disordered regions lie at residues 368-467, 486-561, and 580-914; these read TSSP…STVV, AYHQ…LQQP, and DLIT…IQSK. Composition is skewed to low complexity over residues 387-419 and 432-458; these read PNEN…NNNN and TPSH…SNHT. Composition is skewed to polar residues over residues 503–518 and 528–542; these read IPNH…SAHS and IHPT…VVNN. Low complexity predominate over residues 543-561; the sequence is TQQPQTLQPPQQQHQLQQP. Polar residues predominate over residues 595–616; sequence IPSSSSHGNIPSLVTTSPKSPL. 2 stretches are compositionally biased toward low complexity: residues 617-642 and 683-700; these read QHQQ…ISSN and SSRA…SHTS. 4 stretches are compositionally biased toward basic and acidic residues: residues 701–714, 728–742, 753–855, and 865–893; these read SSDE…SDRK, SKRD…DRSN, VSRD…DRSR, and SRDS…DYKS.

It belongs to the protein kinase superfamily. STE Ser/Thr protein kinase family. STE20 subfamily. Mn(2+) serves as cofactor. Post-translationally, undergoes autophosphorylation in the catalytic domain.

It carries out the reaction L-seryl-[protein] + ATP = O-phospho-L-seryl-[protein] + ADP + H(+). The catalysed reaction is L-threonyl-[protein] + ATP = O-phospho-L-threonyl-[protein] + ADP + H(+). The polypeptide is Serine/threonine-protein kinase fray2 (Dictyostelium discoideum (Social amoeba)).